Here is a 250-residue protein sequence, read N- to C-terminus: Probable S-methyl-5'-thioinosine phosphorylase (250 aa).

Phosphate contacts are provided by residues Thr-14 and 56–57 (RH). Residue Met-189 participates in substrate binding. Position 190 (Thr-190) interacts with phosphate. Substrate is bound at residue 213–215 (NWA).

Belongs to the PNP/MTAP phosphorylase family. MTAP subfamily. Homotrimer.

It carries out the reaction S-methyl-5'-thioinosine + phosphate = 5-(methylsulfanyl)-alpha-D-ribose 1-phosphate + hypoxanthine. It functions in the pathway purine metabolism; purine nucleoside salvage. Catalyzes the reversible phosphorylation of S-methyl-5'-thioinosine (MTI) to hypoxanthine and 5-methylthioribose-1-phosphate. Involved in the breakdown of S-methyl-5'-thioadenosine (MTA), a major by-product of polyamine biosynthesis. Catabolism of (MTA) occurs via deamination to MTI and phosphorolysis to hypoxanthine. The sequence is that of Probable S-methyl-5'-thioinosine phosphorylase from Xanthomonas campestris pv. campestris (strain ATCC 33913 / DSM 3586 / NCPPB 528 / LMG 568 / P 25).